The chain runs to 159 residues: Eukaryotic translation initiation factor 5A (159 aa).

Lysine 55 is subject to Hypusine.

Belongs to the eIF-5A family. In terms of processing, lys-55 undergoes hypusination, a unique post-translational modification that consists in the addition of a butylamino group from spermidine to lysine side chain, leading to the formation of the unusual amino acid hypusine. eIF-5As are the only known proteins to undergo this modification, which is essential for their function.

The protein localises to the cytoplasm. Functionally, translation factor that promotes translation elongation and termination, particularly upon ribosome stalling at specific amino acid sequence contexts. Binds between the exit (E) and peptidyl (P) site of the ribosome and promotes rescue of stalled ribosome: specifically required for efficient translation of polyproline-containing peptides as well as other motifs that stall the ribosome. Acts as a ribosome quality control (RQC) cofactor by joining the RQC complex to facilitate peptidyl transfer during CAT tailing step. This is Eukaryotic translation initiation factor 5A (eif5a) from Dictyostelium discoideum (Social amoeba).